A 295-amino-acid chain; its full sequence is Glycine--tRNA ligase alpha subunit (295 aa).

It belongs to the class-II aminoacyl-tRNA synthetase family. Tetramer of two alpha and two beta subunits.

Its subcellular location is the cytoplasm. It catalyses the reaction tRNA(Gly) + glycine + ATP = glycyl-tRNA(Gly) + AMP + diphosphate. The sequence is that of Glycine--tRNA ligase alpha subunit from Prochlorococcus marinus (strain MIT 9215).